Consider the following 54-residue polypeptide: uncharacterized protein (54 aa).

This is an uncharacterized protein from Dictyostelium discoideum (Social amoeba).